A 209-amino-acid chain; its full sequence is High frequency lysogenization protein HflD homolog (209 aa).

This sequence belongs to the HflD family.

Its subcellular location is the cytoplasm. It is found in the cell inner membrane. This is High frequency lysogenization protein HflD homolog from Halorhodospira halophila (strain DSM 244 / SL1) (Ectothiorhodospira halophila (strain DSM 244 / SL1)).